A 344-amino-acid polypeptide reads, in one-letter code: Arginine N-succinyltransferase (344 aa).

L125 is a binding site for succinyl-CoA. The active-site Proton donor is the H229.

The protein belongs to the arginine N-succinyltransferase family.

It carries out the reaction succinyl-CoA + L-arginine = N(2)-succinyl-L-arginine + CoA + H(+). It functions in the pathway amino-acid degradation; L-arginine degradation via AST pathway; L-glutamate and succinate from L-arginine: step 1/5. Catalyzes the transfer of succinyl-CoA to arginine to produce N(2)-succinylarginine. This is Arginine N-succinyltransferase from Escherichia coli (strain 55989 / EAEC).